The sequence spans 190 residues: Histone H5 (190 aa).

Positions 1 to 29 are disordered; that stretch reads MTESLVLSPAPAKPKRVKASRRSASHPTY. Residues 13-24 are compositionally biased toward basic residues; the sequence is KPKRVKASRRSA. 4 positions are modified to phosphoserine: Ser23, Ser30, Ser146, and Ser167. An H15 domain is found at 25-98; it reads SHPTYSEMIA…GASGSFRLAK (74 aa). Residues 87–190 form a disordered region; sequence GVGASGSFRL…SGARKSPKKK (104 aa). Over residues 104–190 the composition is skewed to basic residues; that stretch reads RSPGKKKKAV…SGARKSPKKK (87 aa).

This sequence belongs to the histone H1/H5 family. In terms of tissue distribution, erythroid cells.

It localises to the nucleus. It is found in the chromosome. Histone H5 performs the same function as H1, being necessary for the condensation of nucleosome chains into higher order structures, and replaces histone H1 in certain cells. The polypeptide is Histone H5 (Gallus gallus (Chicken)).